Here is a 494-residue protein sequence, read N- to C-terminus: Sugar phosphate exchanger 3 (494 aa).

The chain crosses the membrane as a helical span at residues 10 to 30 (GALLTSFSHHHLAVFLLTFFS). Residue Asn58 is glycosylated (N-linked (GlcNAc...) asparagine). The next 5 membrane-spanning stretches (helical) occupy residues 81–101 (TLFL…GLFI), 113–133 (WVLS…GTLT), 146–166 (GLWI…VAVM), 177–197 (VVFG…AFLA), and 209–229 (FLVT…GLLV). Positions 240–261 (GAEESSEEDSQRPLIDGAENED) are disordered. 6 consecutive transmembrane segments (helical) span residues 297-317 (LAYA…PFYL), 333-353 (IWYD…SDVL), 357-377 (APVL…YSRS), 386-406 (LLMT…SSAI), 428-448 (GIVD…VSLI), and 457-477 (VFYF…PLIV).

The protein belongs to the major facilitator superfamily. Organophosphate:Pi antiporter (OPA) (TC 2.A.1.4) family. As to quaternary structure, interacts with ATRAID; the interaction is direct and both proteins are mutually dependent for their stability. Post-translationally, glycosylated.

It localises to the endoplasmic reticulum membrane. The protein localises to the lysosome membrane. Its function is as follows. Unlike the other SLC37 members, lacks glucose-6-phosphate antiporter activity. In osteoclasts, forms a transporter complex with ATRAID for nitrogen-containing-bisphophonates (N-BPs) required for releasing N-BP molecules that have trafficked to lysosomes through fluid-phase endocytosis into the cytosol. This is Sugar phosphate exchanger 3 (Slc37a3) from Mus musculus (Mouse).